Reading from the N-terminus, the 322-residue chain is Ubiquinone biosynthesis O-methyltransferase, mitochondrial (322 aa).

The N-terminal 37 residues, 1–37 (MLASVRVNQLQRLLLSARRLSSSPIIPPSRLLHQRLF), are a transit peptide targeting the mitochondrion. The interval 46 to 75 (AASFSSSHPKIQTLEGKASNKSRSTSSTTS) is disordered. S-adenosyl-L-methionine contacts are provided by Arg108, Gly139, Asp160, and Leu205. Mg(2+) contacts are provided by Glu206, Glu209, and His210.

It belongs to the class I-like SAM-binding methyltransferase superfamily. UbiG/COQ3 family. Component of a multi-subunit COQ enzyme complex. Requires Mg(2+) as cofactor.

It localises to the mitochondrion inner membrane. The enzyme catalyses a 3,4-dihydroxy-5-(all-trans-polyprenyl)benzoate + S-adenosyl-L-methionine = a 4-hydroxy-3-methoxy-5-(all-trans-polyprenyl)benzoate + S-adenosyl-L-homocysteine + H(+). The catalysed reaction is a 3-demethylubiquinone + S-adenosyl-L-methionine = a ubiquinone + S-adenosyl-L-homocysteine. It carries out the reaction a 3-demethylubiquinol + S-adenosyl-L-methionine = a ubiquinol + S-adenosyl-L-homocysteine + H(+). The protein operates within cofactor biosynthesis; ubiquinone biosynthesis. Functionally, O-methyltransferase required for two non-consecutive steps during ubiquinone biosynthesis. Catalyzes the 2 O-methylation of 3,4-dihydroxy-5-(all-trans-polyprenyl)benzoic acid into 4-hydroxy-3-methoxy-5-(all-trans-polyprenyl)benzoic acid. Also catalyzes the last step of ubiquinone biosynthesis by mediating methylation of 3-demethylubiquinone into ubiquinone. Also able to mediate the methylation of 3-demethylubiquinol into ubiquinol. The chain is Ubiquinone biosynthesis O-methyltransferase, mitochondrial from Arabidopsis thaliana (Mouse-ear cress).